The sequence spans 510 residues: Fumarate hydratase, mitochondrial (510 aa).

Residues 1–44 (MYRALRLLARSRPLVRAPAAALASAPGLGGAAVPSFWPPNAARM) constitute a mitochondrion transit peptide. Lys-61, Lys-66, and Lys-80 each carry N6-acetyllysine; alternate. An N6-succinyllysine; alternate mark is found at Lys-61, Lys-66, and Lys-80. Residues Thr-85 and Thr-90 each carry the phosphothreonine modification. An N6-acetyllysine modification is found at Lys-94. Residues Lys-115 and Lys-122 each carry the N6-acetyllysine; alternate modification. 2 positions are modified to N6-succinyllysine; alternate: Lys-115 and Lys-122. Substrate-binding positions include 145 to 147 (SGT), 176 to 179 (HPND), and 186 to 188 (SSN). Residue Lys-213 is modified to N6-acetyllysine. N6-acetyllysine; alternate is present on Lys-223. At Lys-223 the chain carries N6-succinyllysine; alternate. Residue Thr-234 coordinates substrate. Residue His-235 is the Proton donor/acceptor of the active site. The residue at position 236 (Thr-236) is a Phosphothreonine; by PRKDC. N6-acetyllysine is present on Lys-256. Lys-292 is subject to N6-acetyllysine; alternate. Lys-292 carries the N6-succinyllysine; alternate modification. The active site involves Ser-365. Substrate contacts are provided by residues Ser-366 and 371–373 (KVN). Ser-366 carries the phosphoserine modification. 2 positions are modified to N6-succinyllysine: Lys-467 and Lys-473. Position 502 is an N6-acetyllysine (Lys-502).

This sequence belongs to the class-II fumarase/aspartase family. Fumarase subfamily. As to quaternary structure, homotetramer. Interacts with H2AZ1. In terms of processing, phosphorylation at Thr-236 by PRKDC in response to DNA damage promotes translocation to the nucleus and recruitment to DNA double-strand breaks (DSBs). Expressed in red blood cells; underexpressed in red blood cells (cytoplasm) of patients with hereditary non-spherocytic hemolytic anemia of unknown etiology.

The protein localises to the mitochondrion. Its subcellular location is the cytoplasm. It localises to the cytosol. It is found in the nucleus. The protein resides in the chromosome. It catalyses the reaction (S)-malate = fumarate + H2O. The protein operates within carbohydrate metabolism; tricarboxylic acid cycle; (S)-malate from fumarate: step 1/1. Catalyzes the reversible stereospecific interconversion of fumarate to L-malate. Experiments in other species have demonstrated that specific isoforms of this protein act in defined pathways and favor one direction over the other. Its function is as follows. Catalyzes the hydration of fumarate to L-malate in the tricarboxylic acid (TCA) cycle to facilitate a transition step in the production of energy in the form of NADH. Functionally, catalyzes the dehydration of L-malate to fumarate. Fumarate metabolism in the cytosol plays a role during urea cycle and arginine metabolism; fumarate being a by-product of the urea cycle and amino-acid catabolism. Also plays a role in DNA repair by promoting non-homologous end-joining (NHEJ). In response to DNA damage and phosphorylation by PRKDC, translocates to the nucleus and accumulates at DNA double-strand breaks (DSBs): acts by catalyzing formation of fumarate, an inhibitor of KDM2B histone demethylase activity, resulting in enhanced dimethylation of histone H3 'Lys-36' (H3K36me2). This Homo sapiens (Human) protein is Fumarate hydratase, mitochondrial.